The following is a 68-amino-acid chain: Toxin Cg2 (68 aa).

The region spanning 1-66 (KDGYLVNKST…VYPIPGKTCS (66 aa)) is the LCN-type CS-alpha/beta domain. 4 cysteine pairs are disulfide-bonded: Cys-12–Cys-65, Cys-16–Cys-41, Cys-25–Cys-46, and Cys-29–Cys-48.

This sequence belongs to the long (4 C-C) scorpion toxin superfamily. Sodium channel inhibitor family. In terms of tissue distribution, expressed by the venom gland.

It is found in the secreted. Functionally, binds to sodium channels (Nav) and inhibits them. In Centruroides gracilis (Slenderbrown scorpion), this protein is Toxin Cg2.